We begin with the raw amino-acid sequence, 95 residues long: Scytovirin (95 aa).

The tract at residues 3 to 41 is SD1; sequence GPTYCWNEANNPGGPNRCSNNKQCDGARTCSSSGFCQGT. 5 disulfides stabilise this stretch: cysteine 7–cysteine 55, cysteine 20–cysteine 32, cysteine 26–cysteine 38, cysteine 68–cysteine 80, and cysteine 74–cysteine 86. Residues 51–89 are SD2; it reads GPTYCWDEAKNPGGPNRCSNSKQCDGARTCSSSGFCQGT.

In terms of biological role, has strong anti-HIV activity against T-tropic strains of HIV-1 and weaker activity against M-tropic strains of HIV-1. Inhibits HIV-1 fusion and infection of CD4 LTR beta-gal cells in vitro. Inhibits fusion of HIV infected CEM-SS cells with uninfected CEM-SS cells, and fusion of HIV-1 Env expressing HL2/3 cells with CD4 LTR beta-gal cells. Binds to HIV gp120, HIV gp160 and to a lesser extent HIV gp41. Binding to HIV gp120 is glycosylation dependent. Binds with high specificity to the tetrasaccharide Man-alpha-1,2-Man-alpha-1,6-Man-alpha-1,6-Man and also binds the higher-order oligosaccharides oligomannose 8 and oligomannose 9. Does not bind to monosaccharides, complex or hybrid N-linked oligosaccharides or chitin. This Scytonema varium protein is Scytovirin.